We begin with the raw amino-acid sequence, 284 residues long: uncharacterized protein (284 aa).

A helical transmembrane segment spans residues 12 to 32 (ILFILFVVAFCVYLVPRVAIN).

It belongs to the serine esterase family.

It localises to the membrane. This is an uncharacterized protein from Escherichia coli (strain K12).